We begin with the raw amino-acid sequence, 182 residues long: Rhodanese-like domain-containing protein 15, chloroplastic (182 aa).

Residues 1–65 (METTAFNTTS…TTSRGNVAAE (65 aa)) constitute a chloroplast transit peptide. Residues 82–182 (AQAGYRYLDV…WTENELPVEE (101 aa)) enclose the Rhodanese domain. The active-site Cysteine persulfide intermediate is Cys-142.

Its subcellular location is the plastid. It is found in the chloroplast. The protein localises to the thylakoid. This chain is Rhodanese-like domain-containing protein 15, chloroplastic (STR15), found in Arabidopsis thaliana (Mouse-ear cress).